The sequence spans 205 residues: Inactive ribonuclease-like protein 9 (205 aa).

The signal sequence occupies residues Met-1 to Phe-24. 3 disulfide bridges follow: Cys-97-Cys-152, Cys-115-Cys-167, and Cys-122-Cys-129. Residues Asn-130 and Asn-142 are each glycosylated (N-linked (GlcNAc...) asparagine).

The protein belongs to the pancreatic ribonuclease family.

It localises to the secreted. In terms of biological role, does not exhibit any ribonuclease activity. The chain is Inactive ribonuclease-like protein 9 (RNASE9) from Cebus albifrons (White-fronted capuchin).